A 440-amino-acid polypeptide reads, in one-letter code: O-glycoside alpha-1,2-mannosyltransferase homolog 4 (440 aa).

Residues 1–35 lie on the Cytoplasmic side of the membrane; sequence MLGWNKHVFFSESRINFRCLLRKKLKKRCPLSARF. The helical; Signal-anchor for type II membrane protein transmembrane segment at 36–56 threads the bilayer; it reads VLVLLLIVLIFILKMGYKQLI. Topologically, residues 57–440 are lumenal; that stretch reads YKLNHPPLRR…NLIGDGFLDE (384 aa). E336 (nucleophile) is an active-site residue.

The protein belongs to the glycosyltransferase 15 family.

It localises to the cytoplasm. The protein localises to the nucleus. It is found in the golgi apparatus membrane. In terms of biological role, probable mannosyltransferase involved in O-glycosylation of cell wall and secreted proteins. Transfers an alpha-D-mannosyl residue from GDP-mannose into lipid-linked oligosaccharide, forming an alpha-(1-&gt;2)-D-mannosyl-D-mannose linkage. The polypeptide is O-glycoside alpha-1,2-mannosyltransferase homolog 4 (omh4) (Schizosaccharomyces pombe (strain 972 / ATCC 24843) (Fission yeast)).